The primary structure comprises 125 residues: Cytochrome c-556 (125 aa).

Heme-binding residues include Met-13, Cys-113, Cys-116, and His-117. Residues Met-13, Cys-113, Cys-116, and His-117 each coordinate heme c.

In terms of assembly, monomer. Binds 1 heme c group covalently per subunit.

Functionally, low-spin monoheme cytochrome c. The chain is Cytochrome c-556 from Agrobacterium tumefaciens (strain apple 185).